The following is a 256-amino-acid chain: Ubiquinone/menaquinone biosynthesis C-methyltransferase UbiE (256 aa).

S-adenosyl-L-methionine is bound by residues Thr79, Asp100, and 128 to 129 (DA).

Belongs to the class I-like SAM-binding methyltransferase superfamily. MenG/UbiE family.

The enzyme catalyses a 2-demethylmenaquinol + S-adenosyl-L-methionine = a menaquinol + S-adenosyl-L-homocysteine + H(+). It carries out the reaction a 2-methoxy-6-(all-trans-polyprenyl)benzene-1,4-diol + S-adenosyl-L-methionine = a 5-methoxy-2-methyl-3-(all-trans-polyprenyl)benzene-1,4-diol + S-adenosyl-L-homocysteine + H(+). It functions in the pathway quinol/quinone metabolism; menaquinone biosynthesis; menaquinol from 1,4-dihydroxy-2-naphthoate: step 2/2. The protein operates within cofactor biosynthesis; ubiquinone biosynthesis. Functionally, methyltransferase required for the conversion of demethylmenaquinol (DMKH2) to menaquinol (MKH2) and the conversion of 2-polyprenyl-6-methoxy-1,4-benzoquinol (DDMQH2) to 2-polyprenyl-3-methyl-6-methoxy-1,4-benzoquinol (DMQH2). The sequence is that of Ubiquinone/menaquinone biosynthesis C-methyltransferase UbiE from Stutzerimonas stutzeri (strain A1501) (Pseudomonas stutzeri).